The chain runs to 198 residues: Probable nicotinate-nucleotide adenylyltransferase (198 aa).

This sequence belongs to the NadD family.

It carries out the reaction nicotinate beta-D-ribonucleotide + ATP + H(+) = deamido-NAD(+) + diphosphate. It functions in the pathway cofactor biosynthesis; NAD(+) biosynthesis; deamido-NAD(+) from nicotinate D-ribonucleotide: step 1/1. In terms of biological role, catalyzes the reversible adenylation of nicotinate mononucleotide (NaMN) to nicotinic acid adenine dinucleotide (NaAD). The sequence is that of Probable nicotinate-nucleotide adenylyltransferase from Herpetosiphon aurantiacus (strain ATCC 23779 / DSM 785 / 114-95).